A 743-amino-acid polypeptide reads, in one-letter code: MEQTYQYAWIIPFLPLPVPMLIGLGLLLFPTATKSLRRMWAFQSVLLLSIVMIFSLNLSIQQINSSSVYQYVWSWIINNDFSLEFGYLIDPLTSIMSILITTVGIMVLIYSDNYMSHDHGYLRFFAYMSFFSTSMLGLVTSSNLIQIYIFWELVGMCSYLLIGFWFTRPVAAKACQKAFVTNRVGDFGLLLGILGFYWITGSFEFRDLFQIFNNLISNNEVNSVFVTLCAVLLFAGAIAKSAQFPLHVWLPDAMEGPTPISALIHAATMVAAGIFLVARLMPLFIVIPHIMNFISFIGIITVFFGATLALAQKDIKRGLAYSTMSQLGYMMLALGMGSYRSALFHLITHAYSKALLFLGSGSVIHSMETLVGYCPKKSQNMVLMGGLKKHVPITKNSFLLGTLSLCGIPPLACFWSKDEILNDSWLYSPIFAIIAWSTAGFTAFYMCRIYLLTFEGHLNVHFQNYSGKRNTPLYLISLWGKEGSKISNKNLNFCLVTLLKMNKNGRPSFFSNKVYKMDENGRNLIQPFLSIPNFSNTKTSLYPYESDNTMLFPILILILFTLFVGFLGIPFNQDVDILSKWLTPSINLLHQSSNNSIDWYEFCKDAVFSVSIACFGIYIAFFLYKPVYSSFQNLDLINSVVKMGPKRIFSDKIKNAIYDWSYNRGYIDAFYGTFFTAGVRKLAEFTHFFDRRIIDGIPNGVGFMSFFVAEVIKSVGGGRISSYLFFYFSYVSIFLLIYYFLNL.

The next 16 membrane-spanning stretches (helical) occupy residues 9–29, 40–60, 89–109, 125–145, 147–167, 185–205, 224–244, 258–278, 284–304, 327–347, 354–374, 396–416, 425–445, 551–571, 607–627, and 723–743; these read WIIP…LLLF, WAFQ…NLSI, IDPL…MVLI, FAYM…SNLI, IYIF…FWFT, GDFG…SFEF, VFVT…SAQF, TPIS…FLVA, FIVI…TVFF, LGYM…FHLI, ALLF…VGYC, NSFL…CFWS, WLYS…TAFY, LFPI…GIPF, VFSV…YKPV, and YLFF…FLNL.

The protein belongs to the complex I subunit 5 family. As to quaternary structure, NDH is composed of at least 16 different subunits, 5 of which are encoded in the nucleus.

Its subcellular location is the plastid. It localises to the chloroplast thylakoid membrane. It catalyses the reaction a plastoquinone + NADH + (n+1) H(+)(in) = a plastoquinol + NAD(+) + n H(+)(out). The catalysed reaction is a plastoquinone + NADPH + (n+1) H(+)(in) = a plastoquinol + NADP(+) + n H(+)(out). NDH shuttles electrons from NAD(P)H:plastoquinone, via FMN and iron-sulfur (Fe-S) centers, to quinones in the photosynthetic chain and possibly in a chloroplast respiratory chain. The immediate electron acceptor for the enzyme in this species is believed to be plastoquinone. Couples the redox reaction to proton translocation, and thus conserves the redox energy in a proton gradient. This chain is NAD(P)H-quinone oxidoreductase subunit 5, chloroplastic (ndhF), found in Helianthus annuus (Common sunflower).